The primary structure comprises 695 residues: ATP-dependent permease MDL1, mitochondrial (695 aa).

A mitochondrion-targeting transit peptide spans 1–100 (MIVRMIRLCK…RLFVLSKPES (100 aa)). Helical transmembrane passes span 103–123 (IGLA…VPSV), 156–176 (FTAL…RIII), 242–262 (FVGF…MMIL), 337–357 (GLFF…LLLV), and 372–392 (LSSF…LSSF). Positions 103–398 (IGLALLLILI…LSSFYSELMK (296 aa)) constitute an ABC transmembrane type-1 domain. The region spanning 432-673 (IVFKNVSFTY…PNSELNALLA (242 aa)) is the ABC transporter domain. Position 467–474 (467–474 (GPSGSGKS)) interacts with ATP.

Belongs to the ABC transporter superfamily. ABCB family. Mitochondrial peptide exporter (TC 3.A.1.212) subfamily.

The protein resides in the mitochondrion inner membrane. In terms of biological role, mediates export of peptides with molecular masses of 2100 to 600 daltons generated upon proteolysis of mitochondrial inner membrane proteins. This is ATP-dependent permease MDL1, mitochondrial (MDL1) from Saccharomyces cerevisiae (strain ATCC 204508 / S288c) (Baker's yeast).